A 294-amino-acid chain; its full sequence is Cytidine deaminase (294 aa).

2 consecutive CMP/dCMP-type deaminase domains span residues 48–168 (DEDA…FGPK) and 186–294 (VSGD…VLLG). 89 to 91 (NME) serves as a coordination point for substrate. A Zn(2+)-binding site is contributed by histidine 102. Glutamate 104 functions as the Proton donor in the catalytic mechanism. 2 residues coordinate Zn(2+): cysteine 129 and cysteine 132.

It belongs to the cytidine and deoxycytidylate deaminase family. As to quaternary structure, homodimer. Zn(2+) is required as a cofactor.

It carries out the reaction cytidine + H2O + H(+) = uridine + NH4(+). The catalysed reaction is 2'-deoxycytidine + H2O + H(+) = 2'-deoxyuridine + NH4(+). Its function is as follows. This enzyme scavenges exogenous and endogenous cytidine and 2'-deoxycytidine for UMP synthesis. The sequence is that of Cytidine deaminase from Klebsiella pneumoniae subsp. pneumoniae (strain ATCC 700721 / MGH 78578).